The chain runs to 267 residues: Eukaryotic translation initiation factor 3 subunit J (267 aa).

Positions 1-70 (MSWNDDDVFA…KDKKSSTDQV (70 aa)) are disordered. A compositionally biased stretch (acidic residues) spans 24–38 (WDAEEPIMESWDAEE). Residues 39 to 66 (TPAKKETSPKPDSKKNAKKDSKKDKKSS) show a composition bias toward basic and acidic residues. A coiled-coil region spans residues 192-220 (IESIRQSIATLNVLMKDKEREERRARLAK).

Belongs to the eIF-3 subunit J family. In terms of assembly, component of the eukaryotic translation initiation factor 3 (eIF-3) complex.

The protein localises to the cytoplasm. Functionally, component of the eukaryotic translation initiation factor 3 (eIF-3) complex, which is involved in protein synthesis of a specialized repertoire of mRNAs and, together with other initiation factors, stimulates binding of mRNA and methionyl-tRNAi to the 40S ribosome. The eIF-3 complex specifically targets and initiates translation of a subset of mRNAs involved in cell proliferation. The sequence is that of Eukaryotic translation initiation factor 3 subunit J from Vanderwaltozyma polyspora (strain ATCC 22028 / DSM 70294 / BCRC 21397 / CBS 2163 / NBRC 10782 / NRRL Y-8283 / UCD 57-17) (Kluyveromyces polysporus).